Here is a 395-residue protein sequence, read N- to C-terminus: Probable alcohol dehydrogenase EutG (395 aa).

Residues aspartate 57, 116–120 (GSVLD), 156–160 (TTAGT), lysine 178, and 197–201 (LTEGV) contribute to the NAD(+) site. The Fe cation site is built by aspartate 212, histidine 216, histidine 281, and histidine 295. 2 residues coordinate NAD(+): histidine 295 and aspartate 354.

The protein belongs to the iron-containing alcohol dehydrogenase family. Fe cation serves as cofactor.

It localises to the bacterial microcompartment. It catalyses the reaction ethanol + NAD(+) = acetaldehyde + NADH + H(+). Its pathway is amine and polyamine degradation; ethanolamine degradation. Functionally, may act on the acetaldehyde produced from the degradation of ethanolamine, producing ethanol. Active on acetaldehyde and isobutyraldehyde in vitro. In vitro works equally well with NADH or NADPH. In Escherichia coli (strain K12), this protein is Probable alcohol dehydrogenase EutG (eutG).